Reading from the N-terminus, the 491-residue chain is MDPSVLLLLAVLLSLFLLLVRGHAKIHGHLPPGPHPLPLLGNLLQMDRGGLLKCFIQLQEKHGDVFTVHLGPRPVVVLCGTQTIREALVDHAEAFSGRGTIAAAQLVMQDYGIFFASGQRWKTLRRFSLATMKEFGMGKRSVEERIKEEAQCLVEELKKYQGVPLDPTFLFQCITANIICSIVFGERFDYTDDQFLHLLNLMYKIFSLLSSFSGQMFELFSGFLKYFPGVHRQIVKKQQELLDYIAHSVEKHKATLDPSAPRDYIDTYLLRMEKEKSNHNTEFHHQNLMMSVLSLFFAGTETTSATLHYGVLLMLKYPHVTEKVQKEIDQVIGSHRLPTLDDRTKMPYTDAVIHEIQRFSDLVPIGLPHKVIKDTLFRGYLLPKNTEVYPVLSSALHDPQYFEQPDKFNPEHFLDANGALKKCEAFLPFSTGKRICLGESIARNELFIFFTTILQNFSVASPVAPKDIDLTPKESGIGKIPPAHQIYFLAR.

Ser-128 carries the phosphoserine; by PKA modification. Cys-436 contributes to the heme binding site.

The protein belongs to the cytochrome P450 family. Heme serves as cofactor.

Its subcellular location is the endoplasmic reticulum membrane. The protein resides in the microsome membrane. It carries out the reaction an organic molecule + reduced [NADPH--hemoprotein reductase] + O2 = an alcohol + oxidized [NADPH--hemoprotein reductase] + H2O + H(+). Cytochromes P450 are a group of heme-thiolate monooxygenases. In liver microsomes, this enzyme is involved in an NADPH-dependent electron transport pathway. It oxidizes a variety of structurally unrelated compounds, including steroids, fatty acids, and xenobiotics. The polypeptide is Cytochrome P450 2B9 (Cyp2b9) (Mus musculus (Mouse)).